A 2078-amino-acid polypeptide reads, in one-letter code: Autophagy-related protein 2 homolog B (2078 aa).

A Chorein N-terminal domain is found at 13–108 (ACRYLLQRYL…EMVFRPRPRP (96 aa)). Residues Ser-255 and Ser-379 each carry the phosphoserine modification. A disordered region spans residues 473–495 (GSTFPSNLVHPTPLQKTSLPSRS). Positions 486 to 495 (LQKTSLPSRS) are enriched in polar residues. A phosphoserine mark is found at Ser-497, Ser-840, Ser-886, Ser-899, and Ser-1008. The tract at residues 868–888 (EEEENDGHYQEEEEGGAHSLK) is disordered. The segment covering 873–888 (DGHYQEEEEGGAHSLK) has biased composition (basic and acidic residues). Position 1012 is a phosphotyrosine (Tyr-1012). A phosphoserine mark is found at Ser-1016 and Ser-1018. Thr-1022 is modified (phosphothreonine). A disordered region spans residues 1375–1405 (ADMKPGAFQRRSKVDSSGRSSSRGPVLPEAD). A Phosphoserine modification is found at Ser-1526.

The protein belongs to the ATG2 family. In terms of assembly, interacts with WDR45/WIPI4.

It is found in the preautophagosomal structure membrane. It localises to the lipid droplet. The protein resides in the endoplasmic reticulum membrane. The enzyme catalyses a 1,2-diacyl-sn-glycero-3-phospho-L-serine(in) = a 1,2-diacyl-sn-glycero-3-phospho-L-serine(out). The catalysed reaction is a 1,2-diacyl-sn-glycero-3-phosphoethanolamine(in) = a 1,2-diacyl-sn-glycero-3-phosphoethanolamine(out). Lipid transfer protein required for both autophagosome formation and regulation of lipid droplet morphology and dispersion. Tethers the edge of the isolation membrane (IM) to the endoplasmic reticulum (ER) and mediates direct lipid transfer from ER to IM for IM expansion. Binds to the ER exit site (ERES), which is the membrane source for autophagosome formation, and extracts phospholipids from the membrane source and transfers them to ATG9 (ATG9A or ATG9B) to the IM for membrane expansion. Lipid transfer activity is enhanced by WDR45/WIPI4, which promotes ATG2B-association with phosphatidylinositol 3-monophosphate (PI3P)-containing membranes. This Homo sapiens (Human) protein is Autophagy-related protein 2 homolog B.